A 156-amino-acid polypeptide reads, in one-letter code: Small ribosomal subunit protein uS7 (156 aa).

Belongs to the universal ribosomal protein uS7 family. Part of the 30S ribosomal subunit. Contacts proteins S9 and S11.

Functionally, one of the primary rRNA binding proteins, it binds directly to 16S rRNA where it nucleates assembly of the head domain of the 30S subunit. Is located at the subunit interface close to the decoding center, probably blocks exit of the E-site tRNA. This is Small ribosomal subunit protein uS7 from Streptococcus pyogenes serotype M12 (strain MGAS2096).